Consider the following 390-residue polypeptide: Chorismate synthase 2 (390 aa).

Positions 39 and 45 each coordinate NADP(+). FMN is bound by residues 132 to 134, 253 to 254, Gly298, 313 to 317, and Arg339; these read RSS, NA, and KPIPT.

Belongs to the chorismate synthase family. In terms of assembly, homotetramer. The cofactor is FMNH2.

The catalysed reaction is 5-O-(1-carboxyvinyl)-3-phosphoshikimate = chorismate + phosphate. It functions in the pathway metabolic intermediate biosynthesis; chorismate biosynthesis; chorismate from D-erythrose 4-phosphate and phosphoenolpyruvate: step 7/7. Catalyzes the anti-1,4-elimination of the C-3 phosphate and the C-6 proR hydrogen from 5-enolpyruvylshikimate-3-phosphate (EPSP) to yield chorismate, which is the branch point compound that serves as the starting substrate for the three terminal pathways of aromatic amino acid biosynthesis. This reaction introduces a second double bond into the aromatic ring system. The polypeptide is Chorismate synthase 2 (Bacillus cereus (strain ATCC 10987 / NRS 248)).